The primary structure comprises 244 residues: 14-3-3 protein beta/alpha-1 (244 aa).

Met1 is subject to N-acetylmethionine.

Belongs to the 14-3-3 family. Homodimer, and heterodimer with other family members. Expressed in brain, gill, heart, intestine, kidney, liver, ovary, skin, spleen and testis.

It is found in the cytoplasm. Functionally, adapter protein implicated in the regulation of a large spectrum of both general and specialized signaling pathways. Binds to a large number of partners, usually by recognition of a phosphoserine or phosphothreonine motif. Binding generally results in the modulation of the activity of the binding partner. The polypeptide is 14-3-3 protein beta/alpha-1 (Oncorhynchus mykiss (Rainbow trout)).